A 483-amino-acid chain; its full sequence is HSPB1-associated protein 1 (483 aa).

Residues 1–26 (MAAGCEGIAPPTLGERTVGEEGEPVK) form a disordered region. The tract at residues 88 to 208 (ETECSYVDAT…EDTPFLYPTR (121 aa)) is interaction with HSPB1. The JmjC domain maps to 124-288 (WAYADYKYFV…HLARVEEAIT (165 aa)). The tract at residues 388–416 (LIPVTPASEERGGALEGDSEESVSSNGGH) is disordered.

Interacts with CRYAB and HSPB1.

It localises to the cytoplasm. Its function is as follows. May play a role in cellular stress response. The protein is HSPB1-associated protein 1 (Hspbap1) of Mus musculus (Mouse).